Consider the following 204-residue polypeptide: MDDKILEGTTTVGITCKDGVVFASERRASMGNLVAHKVAEKIFKINDHIVTTIAGSVGDAQNLMKIIEAEVSLYQMRNNDKISVKAAASVTANILRSGPMYVQTLLGGMDGDKPSLYSLDPAGGMIEDTYISTGSGSIVAYGVLEDRYHEEITTDEGLEIAVRAIKAASERDTFSGNGYLVAKVTKDGFEMLDKEKVNDIVAKI.

Positions Met-1–Gly-8 are cleaved as a propeptide — removed in mature form; by autocatalysis. The Nucleophile role is filled by Thr-9.

The protein belongs to the peptidase T1B family. In terms of assembly, the 20S proteasome core is composed of 14 alpha and 14 beta subunits that assemble into four stacked heptameric rings, resulting in a barrel-shaped structure. The two inner rings, each composed of seven catalytic beta subunits, are sandwiched by two outer rings, each composed of seven alpha subunits. The catalytic chamber with the active sites is on the inside of the barrel. Has a gated structure, the ends of the cylinder being occluded by the N-termini of the alpha-subunits. Is capped at one or both ends by the proteasome regulatory ATPase, PAN.

It localises to the cytoplasm. It carries out the reaction Cleavage of peptide bonds with very broad specificity.. The formation of the proteasomal ATPase PAN-20S proteasome complex, via the docking of the C-termini of PAN into the intersubunit pockets in the alpha-rings, triggers opening of the gate for substrate entry. Interconversion between the open-gate and close-gate conformations leads to a dynamic regulation of the 20S proteasome proteolysis activity. Functionally, component of the proteasome core, a large protease complex with broad specificity involved in protein degradation. The protein is Proteasome subunit beta of Methanobrevibacter smithii (strain ATCC 35061 / DSM 861 / OCM 144 / PS).